The primary structure comprises 163 residues: Large ribosomal subunit protein uL13m (163 aa).

The residue at position 2 (serine 2) is an N-acetylserine. Residues 2-4 constitute a propeptide that is removed on maturation; it reads SQK.

It belongs to the universal ribosomal protein uL13 family. As to quaternary structure, component of the mitochondrial large ribosomal subunit (mt-LSU). Mature yeast 74S mitochondrial ribosomes consist of a small (37S) and a large (54S) subunit. The 37S small subunit contains a 15S ribosomal RNA (15S mt-rRNA) and 34 different proteins. The 54S large subunit contains a 21S rRNA (21S mt-rRNA) and 46 different proteins.

The protein localises to the mitochondrion. Functionally, component of the mitochondrial ribosome (mitoribosome), a dedicated translation machinery responsible for the synthesis of mitochondrial genome-encoded proteins, including at least some of the essential transmembrane subunits of the mitochondrial respiratory chain. The mitoribosomes are attached to the mitochondrial inner membrane and translation products are cotranslationally integrated into the membrane. The polypeptide is Large ribosomal subunit protein uL13m (MRPL23) (Saccharomyces cerevisiae (strain ATCC 204508 / S288c) (Baker's yeast)).